We begin with the raw amino-acid sequence, 433 residues long: ATP-dependent RNA helicase SUB2 (433 aa).

The short motif at 49-77 (TGFRDFLLKPELLRAIGDCGFEHPSEVQQ) is the Q motif element. Residues 80-255 (IPQSILGTDV…KKFMQNPLEI (176 aa)) enclose the Helicase ATP-binding domain. 93 to 100 (AKSGLGKT) contacts ATP. The DEAD box signature appears at 202–205 (DECD). Positions 267 to 428 (GLQQYYIKLE…EFPEEGVDPS (162 aa)) constitute a Helicase C-terminal domain.

Belongs to the DEAD box helicase family. DECD subfamily.

The protein resides in the nucleus. It carries out the reaction ATP + H2O = ADP + phosphate + H(+). Functionally, ATP-binding RNA helicase involved in transcription elongation and required for the export of mRNA out of the nucleus. SUB2 also plays a role in pre-mRNA splicing and spliceosome assembly. May be involved in rDNA and telomeric silencing, and maintenance of genome integrity. This chain is ATP-dependent RNA helicase SUB2 (SUB2), found in Scheffersomyces stipitis (strain ATCC 58785 / CBS 6054 / NBRC 10063 / NRRL Y-11545) (Yeast).